The following is a 249-amino-acid chain: 5'-nucleotidase SurE (249 aa).

A divalent metal cation is bound by residues Asp-8, Asp-9, Ser-39, and Asn-91.

This sequence belongs to the SurE nucleotidase family. A divalent metal cation is required as a cofactor.

Its subcellular location is the cytoplasm. The catalysed reaction is a ribonucleoside 5'-phosphate + H2O = a ribonucleoside + phosphate. In terms of biological role, nucleotidase that shows phosphatase activity on nucleoside 5'-monophosphates. The sequence is that of 5'-nucleotidase SurE from Haemophilus influenzae (strain PittEE).